Reading from the N-terminus, the 174-residue chain is Austinoid biosynthesis clusters protein H (174 aa).

It belongs to the trt14 isomerase family. As to quaternary structure, homodimer.

It participates in secondary metabolite biosynthesis; terpenoid biosynthesis. In terms of biological role, part of the gene cluster B that mediates the biosynthesis of austinol and dehydroaustinol, two fungal meroterpenoids. The first step of the pathway is the synthesis of 3,5-dimethylorsellinic acid by the polyketide synthase ausA. 3,5-dimethylorsellinic acid is then prenylated by the polyprenyl transferase ausN. Further epoxidation by the FAD-dependent monooxygenase ausM and cyclization by the probable terpene cyclase ausL lead to the formation of protoaustinoid A. Protoaustinoid A is then oxidized to spiro-lactone preaustinoid A3 by the combined action of the FAD-binding monooxygenases ausB and ausC, and the dioxygenase ausE. Acid-catalyzed keto-rearrangement and ring contraction of the tetraketide portion of preaustinoid A3 by ausJ lead to the formation of preaustinoid A4. The aldo-keto reductase ausK, with the help of ausH, is involved in the next step by transforming preaustinoid A4 into isoaustinone which is in turn hydroxylated by the P450 monooxygenase ausI to form austinolide. Finally, the cytochrome P450 monooxygenase ausG modifies austinolide to austinol. Austinol can be further modified to dehydroaustinol which forms a diffusible complex with diorcinol that initiates conidiation. Due to genetic rearrangements of the clusters and the subsequent loss of some enzymes, the end products of the Emericella nidulans austinoid biosynthesis clusters are austinol and dehydroaustinol, even if additional enzymes, such as the O-acetyltransferase ausQ and the cytochrome P450 monooxygenase ausR are still functional. The polypeptide is Austinoid biosynthesis clusters protein H (Emericella nidulans (strain FGSC A4 / ATCC 38163 / CBS 112.46 / NRRL 194 / M139) (Aspergillus nidulans)).